The chain runs to 57 residues: Neurotoxin Oh9-1 (57 aa).

4 cysteine pairs are disulfide-bonded: cysteine 3-cysteine 19, cysteine 12-cysteine 37, cysteine 41-cysteine 49, and cysteine 50-cysteine 55.

This sequence belongs to the three-finger toxin family. Short-chain subfamily. Expressed by the venom gland.

The protein resides in the secreted. This toxin binds and inhibits rat muscle adult alpha-1-beta-1-delta-epsilon/CHRNA1-CHRNB1-CHRND-CHRNE (IC(50)=3.1 uM) and fetal alpha-1-beta-1-gamma-delta/CHRNA1-CHRNB1-CHRNG-CHRND (IC(50)=5.6 uM) nicotinic acetylcholine receptors (nAChR). Shows a very low inhibition on rat neuronal alpha-3-beta-2/CHRNA3-CHRNB2 nAChR (IC(50)=50.2 uM) nAChR. Binds to the acetylcholine-binding pocket and acts as a competitive antagonist. Does not inhibit human glycine receptor (homopentamer composed of alpha-1 subunits, GLRA1), but seems to potentiate it (about 2-fold increased activity). In Ophiophagus hannah (King cobra), this protein is Neurotoxin Oh9-1.